A 92-amino-acid chain; its full sequence is UPF0250 protein CGSHiEE_03170 (92 aa).

The protein belongs to the UPF0250 family.

The sequence is that of UPF0250 protein CGSHiEE_03170 from Haemophilus influenzae (strain PittEE).